Consider the following 181-residue polypeptide: Crossover junction endodeoxyribonuclease RuvC (181 aa).

Active-site residues include aspartate 8, glutamate 67, and aspartate 139. Aspartate 8, glutamate 67, and aspartate 139 together coordinate Mg(2+).

It belongs to the RuvC family. Homodimer which binds Holliday junction (HJ) DNA. The HJ becomes 2-fold symmetrical on binding to RuvC with unstacked arms; it has a different conformation from HJ DNA in complex with RuvA. In the full resolvosome a probable DNA-RuvA(4)-RuvB(12)-RuvC(2) complex forms which resolves the HJ. Mg(2+) is required as a cofactor.

The protein localises to the cytoplasm. It catalyses the reaction Endonucleolytic cleavage at a junction such as a reciprocal single-stranded crossover between two homologous DNA duplexes (Holliday junction).. In terms of biological role, the RuvA-RuvB-RuvC complex processes Holliday junction (HJ) DNA during genetic recombination and DNA repair. Endonuclease that resolves HJ intermediates. Cleaves cruciform DNA by making single-stranded nicks across the HJ at symmetrical positions within the homologous arms, yielding a 5'-phosphate and a 3'-hydroxyl group; requires a central core of homology in the junction. The consensus cleavage sequence is 5'-(A/T)TT(C/G)-3'. Cleavage occurs on the 3'-side of the TT dinucleotide at the point of strand exchange. HJ branch migration catalyzed by RuvA-RuvB allows RuvC to scan DNA until it finds its consensus sequence, where it cleaves and resolves the cruciform DNA. The polypeptide is Crossover junction endodeoxyribonuclease RuvC (Acinetobacter baylyi (strain ATCC 33305 / BD413 / ADP1)).